The following is a 94-amino-acid chain: Large ribosomal subunit protein uL23 (94 aa).

This sequence belongs to the universal ribosomal protein uL23 family. In terms of assembly, part of the 50S ribosomal subunit. Contacts protein L29, and trigger factor when it is bound to the ribosome.

One of the early assembly proteins it binds 23S rRNA. One of the proteins that surrounds the polypeptide exit tunnel on the outside of the ribosome. Forms the main docking site for trigger factor binding to the ribosome. The chain is Large ribosomal subunit protein uL23 from Geobacter metallireducens (strain ATCC 53774 / DSM 7210 / GS-15).